The sequence spans 423 residues: Endochitinase 1 (423 aa).

An N-terminal signal peptide occupies residues 1–22; it reads MPSLFAQSLAIIATLQATLGLA. Positions 39-401 constitute a GH18 domain; the sequence is YVNAVYFTNW…GTSSNKLGGP (363 aa). Residues Asn-74, Asn-78, and Asn-96 are each glycosylated (N-linked (GlcNAc...) asparagine). Residues 103-104 and 130-133 contribute to the chitin site; these read GT and GGWT. Residue Glu-172 is the Proton donor of the active site. Chitin-binding positions include Tyr-173 and 238 to 241; that span reads MAYD. An N-linked (GlcNAc...) asparagine glycan is attached at Asn-248. Trp-378 is a binding site for chitin. A disordered region spans residues 380–423; it reads ASSDRSGSQSLIGTSSNKLGGPDSTENLLNYPDSKYDNMRKQMA. Residues 383–407 show a composition bias toward polar residues; it reads DRSGSQSLIGTSSNKLGGPDSTENL. A compositionally biased stretch (basic and acidic residues) spans 413-423; it reads SKYDNMRKQMA.

This sequence belongs to the glycosyl hydrolase 18 family. Chitinase class V subfamily.

The protein resides in the secreted. It carries out the reaction Random endo-hydrolysis of N-acetyl-beta-D-glucosaminide (1-&gt;4)-beta-linkages in chitin and chitodextrins.. Secreted chitinase involved in the degradation of chitin, a component of the cell walls of fungi and exoskeletal elements of some animals (including worms and arthropods). Participates in the infection process and directly acts in the penetration process of the host cuticle. The polypeptide is Endochitinase 1 (chit1) (Metarhizium anisopliae (Entomophthora anisopliae)).